The sequence spans 346 residues: Biotin synthase (346 aa).

The 219-residue stretch at 38 to 256 folds into the Radical SAM core domain; the sequence is QQVQVSTLLS…IAVARIMMPT (219 aa). [4Fe-4S] cluster is bound by residues Cys53, Cys57, and Cys60. Positions 97, 128, 188, and 260 each coordinate [2Fe-2S] cluster.

This sequence belongs to the radical SAM superfamily. Biotin synthase family. In terms of assembly, homodimer. The cofactor is [4Fe-4S] cluster. It depends on [2Fe-2S] cluster as a cofactor.

The enzyme catalyses (4R,5S)-dethiobiotin + (sulfur carrier)-SH + 2 reduced [2Fe-2S]-[ferredoxin] + 2 S-adenosyl-L-methionine = (sulfur carrier)-H + biotin + 2 5'-deoxyadenosine + 2 L-methionine + 2 oxidized [2Fe-2S]-[ferredoxin]. Its pathway is cofactor biosynthesis; biotin biosynthesis; biotin from 7,8-diaminononanoate: step 2/2. In terms of biological role, catalyzes the conversion of dethiobiotin (DTB) to biotin by the insertion of a sulfur atom into dethiobiotin via a radical-based mechanism. This chain is Biotin synthase, found in Salmonella newport (strain SL254).